The primary structure comprises 688 residues: Probable xyloglucan glycosyltransferase 7 (688 aa).

The interval 1-25 (MAPSWWGRSGGGGVGNGGGTPVVVK) is disordered. The segment covering 8 to 20 (RSGGGGVGNGGGT) has biased composition (gly residues). 2 helical membrane passes run 121-141 (VSLV…LQGW) and 183-203 (VALF…CFWI). Residue Asp-269 is part of the active site. Residues Asp-328 and Asp-330 each contribute to the substrate site. The active site involves Asp-422. The next 2 helical transmembrane spans lie at 500–520 (LILP…TMFV) and 525–545 (LPAW…ILPA). The tract at residues 604–635 (HSKQQRVGSAPNLDALTKEESNPKKDSKKKKH) is disordered. The segment covering 619–628 (LTKEESNPKK) has biased composition (basic and acidic residues). 2 helical membrane-spanning segments follow: residues 638–657 (IYRK…ARSL) and 663–683 (IHFY…LDLI).

The protein belongs to the glycosyltransferase 2 family. Plant cellulose synthase-like C subfamily.

It is found in the golgi apparatus membrane. In terms of biological role, probable beta-1,4-glucan synthase rather involved in the synthesis of the xyloglucan backbone than cellulose. Seems to work simultaneously with xyloglucan 6-xylosyltransferase. Xyloglucan is a noncellulosic polysaccharides of plant cell wall and consists of a glucan backbone substituted by xylose, galactose and fucose. The protein is Probable xyloglucan glycosyltransferase 7 (CSLC7) of Oryza sativa subsp. japonica (Rice).